Consider the following 207-residue polypeptide: Ribosomal RNA small subunit methyltransferase G (207 aa).

S-adenosyl-L-methionine contacts are provided by residues Gly-74, Leu-79, 125 to 126 (VE), and Arg-140.

This sequence belongs to the methyltransferase superfamily. RNA methyltransferase RsmG family.

The protein resides in the cytoplasm. The enzyme catalyses guanosine(527) in 16S rRNA + S-adenosyl-L-methionine = N(7)-methylguanosine(527) in 16S rRNA + S-adenosyl-L-homocysteine. Functionally, specifically methylates the N7 position of guanine in position 527 of 16S rRNA. This chain is Ribosomal RNA small subunit methyltransferase G, found in Shewanella piezotolerans (strain WP3 / JCM 13877).